Here is a 490-residue protein sequence, read N- to C-terminus: Aspartyl/glutamyl-tRNA(Asn/Gln) amidotransferase subunit B (490 aa).

The protein belongs to the GatB/GatE family. GatB subfamily. Heterotrimer of A, B and C subunits.

The catalysed reaction is L-glutamyl-tRNA(Gln) + L-glutamine + ATP + H2O = L-glutaminyl-tRNA(Gln) + L-glutamate + ADP + phosphate + H(+). It carries out the reaction L-aspartyl-tRNA(Asn) + L-glutamine + ATP + H2O = L-asparaginyl-tRNA(Asn) + L-glutamate + ADP + phosphate + 2 H(+). Functionally, allows the formation of correctly charged Asn-tRNA(Asn) or Gln-tRNA(Gln) through the transamidation of misacylated Asp-tRNA(Asn) or Glu-tRNA(Gln) in organisms which lack either or both of asparaginyl-tRNA or glutaminyl-tRNA synthetases. The reaction takes place in the presence of glutamine and ATP through an activated phospho-Asp-tRNA(Asn) or phospho-Glu-tRNA(Gln). The chain is Aspartyl/glutamyl-tRNA(Asn/Gln) amidotransferase subunit B from Prochlorococcus marinus (strain AS9601).